Consider the following 225-residue polypeptide: Endonuclease V (225 aa).

2 residues coordinate Mg(2+): aspartate 43 and aspartate 110. 2 interaction with target DNA regions span residues 139–141 (KSR) and 214–221 (HIYTQRLK).

The protein belongs to the endonuclease V family. Mg(2+) is required as a cofactor.

It localises to the cytoplasm. The catalysed reaction is Endonucleolytic cleavage at apurinic or apyrimidinic sites to products with a 5'-phosphate.. DNA repair enzyme involved in the repair of deaminated bases. Selectively cleaves double-stranded DNA at the second phosphodiester bond 3' to a deoxyinosine leaving behind the intact lesion on the nicked DNA. In vitro, can also cleave single-stranded substrates with inosine, double-stranded DNA with apurinic sites, or DNA sites with uracil or a mismatched base. When present in molar excess, two protein molecules can bind to the same DNA substrate and effect cleavage of both strands (in vitro). This chain is Endonuclease V, found in Thermotoga maritima (strain ATCC 43589 / DSM 3109 / JCM 10099 / NBRC 100826 / MSB8).